Here is a 172-residue protein sequence, read N- to C-terminus: Large ribosomal subunit protein uL10 (172 aa).

It belongs to the universal ribosomal protein uL10 family. As to quaternary structure, part of the ribosomal stalk of the 50S ribosomal subunit. The N-terminus interacts with L11 and the large rRNA to form the base of the stalk. The C-terminus forms an elongated spine to which L12 dimers bind in a sequential fashion forming a multimeric L10(L12)X complex.

Functionally, forms part of the ribosomal stalk, playing a central role in the interaction of the ribosome with GTP-bound translation factors. The chain is Large ribosomal subunit protein uL10 from Methylorubrum populi (strain ATCC BAA-705 / NCIMB 13946 / BJ001) (Methylobacterium populi).